Consider the following 413-residue polypeptide: Putative acid phosphatase 11 (413 aa).

The active-site Nucleophile is His35. The active-site Proton donor is Asp315. Cys381 and Cys387 are oxidised to a cystine.

Belongs to the histidine acid phosphatase family.

The enzyme catalyses a phosphate monoester + H2O = an alcohol + phosphate. In Caenorhabditis elegans, this protein is Putative acid phosphatase 11 (pho-11).